We begin with the raw amino-acid sequence, 141 residues long: Large ribosomal subunit protein uL11 (141 aa).

Belongs to the universal ribosomal protein uL11 family. As to quaternary structure, part of the ribosomal stalk of the 50S ribosomal subunit. Interacts with L10 and the large rRNA to form the base of the stalk. L10 forms an elongated spine to which L12 dimers bind in a sequential fashion forming a multimeric L10(L12)X complex. Post-translationally, one or more lysine residues are methylated.

Functionally, forms part of the ribosomal stalk which helps the ribosome interact with GTP-bound translation factors. This Herpetosiphon aurantiacus (strain ATCC 23779 / DSM 785 / 114-95) protein is Large ribosomal subunit protein uL11.